We begin with the raw amino-acid sequence, 212 residues long: Phosphatidylserine decarboxylase proenzyme (212 aa).

Catalysis depends on Ser182, which acts as the Schiff-base intermediate with substrate; via pyruvic acid. Pyruvic acid (Ser); by autocatalysis is present on Ser182.

This sequence belongs to the phosphatidylserine decarboxylase family. PSD-A subfamily. In terms of assembly, heterodimer of a large membrane-associated beta subunit and a small pyruvoyl-containing alpha subunit. The cofactor is pyruvate. Is synthesized initially as an inactive proenzyme. Formation of the active enzyme involves a self-maturation process in which the active site pyruvoyl group is generated from an internal serine residue via an autocatalytic post-translational modification. Two non-identical subunits are generated from the proenzyme in this reaction, and the pyruvate is formed at the N-terminus of the alpha chain, which is derived from the carboxyl end of the proenzyme. The post-translation cleavage follows an unusual pathway, termed non-hydrolytic serinolysis, in which the side chain hydroxyl group of the serine supplies its oxygen atom to form the C-terminus of the beta chain, while the remainder of the serine residue undergoes an oxidative deamination to produce ammonia and the pyruvoyl prosthetic group on the alpha chain.

Its subcellular location is the cell membrane. The catalysed reaction is a 1,2-diacyl-sn-glycero-3-phospho-L-serine + H(+) = a 1,2-diacyl-sn-glycero-3-phosphoethanolamine + CO2. The protein operates within phospholipid metabolism; phosphatidylethanolamine biosynthesis; phosphatidylethanolamine from CDP-diacylglycerol: step 2/2. Its function is as follows. Catalyzes the formation of phosphatidylethanolamine (PtdEtn) from phosphatidylserine (PtdSer). This chain is Phosphatidylserine decarboxylase proenzyme, found in Paraburkholderia xenovorans (strain LB400).